The following is a 254-amino-acid chain: Type II restriction enzyme HpaI (254 aa).

The enzyme catalyses Endonucleolytic cleavage of DNA to give specific double-stranded fragments with terminal 5'-phosphates.. Its function is as follows. A P subtype restriction enzyme that recognizes the double-stranded sequence 5'-GTTAAC-3' and cleaves after T-3. The sequence is that of Type II restriction enzyme HpaI (hpaIR) from Haemophilus parainfluenzae.